The chain runs to 605 residues: Putative glutaminase 2 (605 aa).

Residues serine 213, asparagine 262, glutamate 308, asparagine 315, tyrosine 342, tyrosine 394, and valine 412 each contribute to the substrate site. 2 ANK repeats span residues 480–509 (DRLIPVFHVARAGDLPTMRRLYMQGEDLNT) and 513–543 (DDRTVLHIAATEGYETMIKFLVNVAKVDVDK). Basic and acidic residues predominate over residues 569 to 581 (KAMKRPEQHRKDS). A disordered region spans residues 569–605 (KAMKRPEQHRKDSVSSLDTDDEIDDDGFPEKPSFTID). Residues 586-595 (DTDDEIDDDG) show a composition bias toward acidic residues.

This sequence belongs to the glutaminase family.

The catalysed reaction is L-glutamine + H2O = L-glutamate + NH4(+). In Caenorhabditis elegans, this protein is Putative glutaminase 2 (glna-2).